Here is a 98-residue protein sequence, read N- to C-terminus: NADH-ubiquinone oxidoreductase chain 4L (98 aa).

A run of 3 helical transmembrane segments spans residues 1–21 (MSMV…GLLM), 29–49 (SLLC…VTIL), and 61–81 (IILL…LVMV).

The protein belongs to the complex I subunit 4L family. As to quaternary structure, core subunit of respiratory chain NADH dehydrogenase (Complex I) which is composed of 45 different subunits.

Its subcellular location is the mitochondrion inner membrane. It carries out the reaction a ubiquinone + NADH + 5 H(+)(in) = a ubiquinol + NAD(+) + 4 H(+)(out). Functionally, core subunit of the mitochondrial membrane respiratory chain NADH dehydrogenase (Complex I) which catalyzes electron transfer from NADH through the respiratory chain, using ubiquinone as an electron acceptor. Part of the enzyme membrane arm which is embedded in the lipid bilayer and involved in proton translocation. The chain is NADH-ubiquinone oxidoreductase chain 4L (MT-ND4L) from Phoca fasciata (Ribbon seal).